The primary structure comprises 512 residues: Alpha-1B-glycoprotein (512 aa).

Residues Met1 to Gly18 form the signal peptide. 5 Ig-like V-type domains span residues Met22–Lys126, Glu127–Ser219, Gln220–Leu312, Met313–Asn415, and Gly416–Gly512. N-linked (GlcNAc...) asparagine glycans are attached at residues Asn44, Asn89, and Asn192. 5 disulfide bridges follow: Cys49-Cys96, Cys153-Cys195, Cys245-Cys292, Cys343-Cys392, and Cys441-Cys488. Asn369, Asn381, Asn389, and Asn485 each carry an N-linked (GlcNAc...) asparagine glycan.

In terms of assembly, interacts with CRISP3. Expressed in the liver hepatocytes of male and female GH transgenic mice and in the liver of female, but not of male, non-transgenic mice.

The protein localises to the secreted. This is Alpha-1B-glycoprotein (A1bg) from Mus musculus (Mouse).